The chain runs to 731 residues: DNA gyrase subunit B, chloroplastic/mitochondrial (731 aa).

Residues 512-619 (AEIFIVEGDS…RYQRALFEEG (108 aa)) form the Toprim domain. The Mg(2+) site is built by Glu-518, Asp-592, and Asp-594.

This sequence belongs to the type II topoisomerase GyrB family. Made up of two chains. The A chain is responsible for DNA breakage and rejoining; the B chain catalyzes ATP hydrolysis. It depends on Mg(2+) as a cofactor. Requires Mn(2+) as cofactor. The cofactor is Ca(2+). Ubiquitous.

It is found in the plastid. The protein localises to the chloroplast. Its subcellular location is the mitochondrion. The enzyme catalyses ATP-dependent breakage, passage and rejoining of double-stranded DNA.. Seems to play a critical role in chloroplast nucleoid partitioning by regulating DNA topology. A type II topoisomerase that negatively supercoils closed circular double-stranded DNA in an ATP-dependent manner. This chain is DNA gyrase subunit B, chloroplastic/mitochondrial (GYRB), found in Nicotiana benthamiana.